The chain runs to 271 residues: tRNA pseudouridine synthase A (271 aa).

The active-site Nucleophile is D51. Y109 provides a ligand contact to substrate.

It belongs to the tRNA pseudouridine synthase TruA family. As to quaternary structure, homodimer.

It carries out the reaction uridine(38/39/40) in tRNA = pseudouridine(38/39/40) in tRNA. In terms of biological role, formation of pseudouridine at positions 38, 39 and 40 in the anticodon stem and loop of transfer RNAs. This chain is tRNA pseudouridine synthase A, found in Methylococcus capsulatus (strain ATCC 33009 / NCIMB 11132 / Bath).